Here is a 296-residue protein sequence, read N- to C-terminus: Ribosomal RNA small subunit methyltransferase H (296 aa).

S-adenosyl-L-methionine-binding positions include glycine 41–histidine 43, aspartate 60, phenylalanine 87, aspartate 103, and glutamine 110.

The protein belongs to the methyltransferase superfamily. RsmH family.

The protein resides in the cytoplasm. It catalyses the reaction cytidine(1402) in 16S rRNA + S-adenosyl-L-methionine = N(4)-methylcytidine(1402) in 16S rRNA + S-adenosyl-L-homocysteine + H(+). Specifically methylates the N4 position of cytidine in position 1402 (C1402) of 16S rRNA. This is Ribosomal RNA small subunit methyltransferase H from Synechococcus elongatus (strain ATCC 33912 / PCC 7942 / FACHB-805) (Anacystis nidulans R2).